The following is a 223-amino-acid chain: Lipoprotein-releasing system ATP-binding protein LolD (223 aa).

The ABC transporter domain maps to 1-223 (MAKVFRSGST…DEVEPQSLPA (223 aa)). An ATP-binding site is contributed by 32-39 (GDSGSGKS).

The protein belongs to the ABC transporter superfamily. Lipoprotein translocase (TC 3.A.1.125) family. As to quaternary structure, the complex is composed of two ATP-binding proteins (LolD) and two transmembrane proteins (LolC and LolE).

The protein localises to the cell inner membrane. In terms of biological role, part of the ABC transporter complex LolCDE involved in the translocation of mature outer membrane-directed lipoproteins, from the inner membrane to the periplasmic chaperone, LolA. Responsible for the formation of the LolA-lipoprotein complex in an ATP-dependent manner. This Koribacter versatilis (strain Ellin345) protein is Lipoprotein-releasing system ATP-binding protein LolD.